Reading from the N-terminus, the 1001-residue chain is Copper-transporting ATPase RAN1 (1001 aa).

The interval 1-21 is disordered; the sequence is MAPSRRDLQLTPVTGGSSSQI. At 1–298 the chain is on the cytoplasmic side; the sequence is MAPSRRDLQL…TGEASNMFRR (298 aa). Residues 11-21 show a composition bias toward polar residues; that stretch reads TPVTGGSSSQI. 2 HMA domains span residues 56–122 and 133–199; these read RKIQ…FEAE and LVGQ…FEGS. C67, C70, C144, and C147 together coordinate Cu(+). The 67-residue stretch at 207–273 folds into the HMA 3; degenerate domain; it reads DKLVLRVDGI…GIEEDGFGKF (67 aa). Residues 299-320 form a helical membrane-spanning segment; that stretch reads FISSLVLSIPLFFIQVICPHIA. Residues 321–338 are Extracellular-facing; the sequence is LFDALLVWRCGPFMMGDW. A helical transmembrane segment spans residues 339–358; that stretch reads LKWALVSVIQFVIGKRFYVA. At 359 to 365 the chain is on the cytoplasmic side; the sequence is AWRALRN. The chain crosses the membrane as a helical span at residues 366 to 386; the sequence is GSTNMDVLVALGTSASYFYSV. Topologically, residues 387–403 are extracellular; that stretch reads GALLYGAVTGFWSPTYF. The chain crosses the membrane as a helical span at residues 404–424; that stretch reads DASAMLITFVLLGKYLESLAK. Residues 425-558 are Cytoplasmic-facing; it reads GKTSDAMKKL…KAPIQKFADY (134 aa). Residues 559 to 581 form a helical membrane-spanning segment; the sequence is VASIFVPVVITLALFTLVGWSIG. Over 582-602 the chain is Extracellular; it reads GAVGAYPDEWLPENGTHFVFS. The chain crosses the membrane as a helical span at residues 603–620; that stretch reads LMFSISVVVIACPCALGL. Over 621-931 the chain is Cytoplasmic; it reads ATPTAVMVAT…DLSRKTLTRI (311 aa). The active-site 4-aspartylphosphate intermediate is the D658. Mg(2+) contacts are provided by D877 and D881. Residues 932–951 traverse the membrane as a helical segment; the sequence is RLNYVFAMAYNVVSIPIAAG. Residues 952 to 963 lie on the Extracellular side of the membrane; sequence VFFPVLRVQLPP. A helical membrane pass occupies residues 964–982; sequence WAAGACMALSSVSVVCSSL. Residues 983 to 1001 lie on the Cytoplasmic side of the membrane; the sequence is LLRRYKKPRLTTVLKITTE.

The protein belongs to the cation transport ATPase (P-type) (TC 3.A.3) family. Type IB subfamily.

Its subcellular location is the membrane. It catalyses the reaction Cu(+)(in) + ATP + H2O = Cu(+)(out) + ADP + phosphate + H(+). Functionally, involved in copper import into the cell. Essential for ethylene signaling, which requires copper. Acts by delivering copper to create functional hormone receptors. The chain is Copper-transporting ATPase RAN1 (RAN1) from Arabidopsis thaliana (Mouse-ear cress).